The primary structure comprises 336 residues: Anthranilate phosphoribosyltransferase (336 aa).

Residues Gly-79, 82-83 (GD), Thr-87, 89-92 (NIST), 107-115 (KHGNRCVSS), and Ala-119 each bind 5-phospho-alpha-D-ribose 1-diphosphate. Gly-79 is an anthranilate binding site. Ser-91 lines the Mg(2+) pocket. Asn-110 contributes to the anthranilate binding site. Arg-165 contacts anthranilate. Positions 224 and 225 each coordinate Mg(2+).

It belongs to the anthranilate phosphoribosyltransferase family. As to quaternary structure, homodimer. It depends on Mg(2+) as a cofactor.

The catalysed reaction is N-(5-phospho-beta-D-ribosyl)anthranilate + diphosphate = 5-phospho-alpha-D-ribose 1-diphosphate + anthranilate. It functions in the pathway amino-acid biosynthesis; L-tryptophan biosynthesis; L-tryptophan from chorismate: step 2/5. Catalyzes the transfer of the phosphoribosyl group of 5-phosphorylribose-1-pyrophosphate (PRPP) to anthranilate to yield N-(5'-phosphoribosyl)-anthranilate (PRA). The chain is Anthranilate phosphoribosyltransferase from Lachnoclostridium phytofermentans (strain ATCC 700394 / DSM 18823 / ISDg) (Clostridium phytofermentans).